We begin with the raw amino-acid sequence, 932 residues long: Glycine dehydrogenase (decarboxylating) (932 aa).

K685 carries the post-translational modification N6-(pyridoxal phosphate)lysine.

It belongs to the GcvP family. In terms of assembly, the glycine cleavage system is composed of four proteins: P, T, L and H. The cofactor is pyridoxal 5'-phosphate.

It catalyses the reaction N(6)-[(R)-lipoyl]-L-lysyl-[glycine-cleavage complex H protein] + glycine + H(+) = N(6)-[(R)-S(8)-aminomethyldihydrolipoyl]-L-lysyl-[glycine-cleavage complex H protein] + CO2. In terms of biological role, the glycine cleavage system catalyzes the degradation of glycine. The P protein binds the alpha-amino group of glycine through its pyridoxal phosphate cofactor; CO(2) is released and the remaining methylamine moiety is then transferred to the lipoamide cofactor of the H protein. This is Glycine dehydrogenase (decarboxylating) from Brucella suis (strain ATCC 23445 / NCTC 10510).